We begin with the raw amino-acid sequence, 88 residues long: MGIARILSAVLFLSVLFVVTFPALLLADHHDGRIDTCRLPSDRGRCKASFERWYFNGRTCAKFIYGGCGGNGNKFPTEKACMKRCAKA.

Positions 1–27 (MGIARILSAVLFLSVLFVVTFPALLLA) are cleaved as a signal peptide. Residues 28-33 (DHHDGR) constitute a propeptide that is removed on maturation. The BPTI/Kunitz inhibitor domain maps to 37-85 (CRLPSDRGRCKASFERWYFNGRTCAKFIYGGCGGNGNKFPTEKACMKRC). Cystine bridges form between Cys37–Cys85, Cys46–Cys68, and Cys60–Cys81.

It belongs to the venom Kunitz-type family. 02 (native) subfamily. Expressed by the venom gland.

The protein resides in the secreted. Functionally, toxin with unknown function. In Cyriopagopus schmidti (Chinese bird spider), this protein is Kunitz-type kappaPI-theraphotoxin-Hs1e.